A 946-amino-acid polypeptide reads, in one-letter code: Leucine--tRNA ligase (946 aa).

Positions Pro40 to His51 match the 'HIGH' region motif. The 'KMSKS' region motif lies at Lys719–Ser723. Lys722 contributes to the ATP binding site.

This sequence belongs to the class-I aminoacyl-tRNA synthetase family.

The protein resides in the cytoplasm. It carries out the reaction tRNA(Leu) + L-leucine + ATP = L-leucyl-tRNA(Leu) + AMP + diphosphate. This is Leucine--tRNA ligase from Parabacteroides distasonis (strain ATCC 8503 / DSM 20701 / CIP 104284 / JCM 5825 / NCTC 11152).